Reading from the N-terminus, the 195-residue chain is Transcriptional regulator GfcR (195 aa).

This sequence belongs to the purine/pyrimidine phosphoribosyltransferase family. GfcR subfamily.

The polypeptide is Transcriptional regulator GfcR (Archaeoglobus fulgidus (strain ATCC 49558 / DSM 4304 / JCM 9628 / NBRC 100126 / VC-16)).